A 334-amino-acid polypeptide reads, in one-letter code: Protein-methionine-sulfoxide reductase catalytic subunit MsrP (334 aa).

The segment at residues 1-44 (MKKNQFLKESDVTAESVFFMKRRQVLKALGISAAALSLPHAAHA) is a signal peptide (tat-type signal). Mo-molybdopterin contacts are provided by residues Asn88, 91 to 92 (YE), Cys146, Thr181, Asn233, Arg238, and 249 to 251 (GIK).

The protein belongs to the MsrP family. Heterodimer of a catalytic subunit (MsrP) and a heme-binding subunit (MsrQ). It depends on Mo-molybdopterin as a cofactor. In terms of processing, predicted to be exported by the Tat system. The position of the signal peptide cleavage has not been experimentally proven.

It localises to the periplasm. The enzyme catalyses L-methionyl-[protein] + a quinone + H2O = L-methionyl-(S)-S-oxide-[protein] + a quinol. It carries out the reaction L-methionyl-[protein] + a quinone + H2O = L-methionyl-(R)-S-oxide-[protein] + a quinol. Its function is as follows. Part of the MsrPQ system that repairs oxidized periplasmic proteins containing methionine sulfoxide residues (Met-O), using respiratory chain electrons. Thus protects these proteins from oxidative-stress damage caused by reactive species of oxygen and chlorine generated by the host defense mechanisms. MsrPQ is essential for the maintenance of envelope integrity under bleach stress, rescuing a wide series of structurally unrelated periplasmic proteins from methionine oxidation, including the primary periplasmic chaperone SurA and the lipoprotein Pal. The catalytic subunit MsrP is non-stereospecific, being able to reduce both (R-) and (S-) diastereoisomers of methionine sulfoxide. This is Protein-methionine-sulfoxide reductase catalytic subunit MsrP from Escherichia coli O9:H4 (strain HS).